Reading from the N-terminus, the 1377-residue chain is Pleckstrin homology-like domain family B member 1 (1377 aa).

The residue at position 51 (S51) is a Phosphoserine. Positions 64 to 125 (TVIGSAARDI…LTQGCMLCLG (62 aa)) constitute an FHA domain. Position 131 is an asymmetric dimethylarginine (R131). Positions 150–187 (RAPGPPYSPVPAESESLVNGNHTPQTATRGPSACASHS) are disordered. The segment covering 165-178 (SLVNGNHTPQTATR) has biased composition (polar residues). Residues S192, S220, and S223 each carry the phosphoserine modification. Disordered regions lie at residues 211–334 (AAGK…LTDS) and 370–535 (GALS…GSFS). A compositionally biased stretch (low complexity) spans 252 to 273 (SPAFSPLSSPASSGSCASHSPS). The span at 288–303 (RSSSYHLALQPPQSRP) shows a compositional bias: polar residues. Over residues 309–322 (ESPRLSRKGGHERP) the composition is skewed to basic and acidic residues. Phosphoserine is present on residues S324, S334, S381, S404, S430, S443, S461, S470, S489, and S501. Residues 456–473 (ELPPLSPSLSRRALSPLP) are compositionally biased toward low complexity. The segment covering 481-491 (KLNREVAESPR) has biased composition (basic and acidic residues). R512 carries the post-translational modification Omega-N-methylarginine. Phosphoserine occurs at positions 518 and 520. T522 carries the phosphothreonine modification. S533, S539, S551, S555, S563, S578, and S583 each carry phosphoserine. Low complexity predominate over residues 653–663 (PSRGLAGASGR). Disordered regions lie at residues 653 to 707 (PSRG…APST), 936 to 1019 (TGPA…GSLP), and 1119 to 1138 (SMETSISTGGNSACSPDNMS). Basic and acidic residues predominate over residues 677–691 (ESMERSDEENLKEEC). The residue at position 678 (S678) is a Phosphoserine. The stretch at 683–809 (DEENLKEECS…TETKLFEDLE (127 aa)) forms a coiled coil. Phosphoserine occurs at positions 971 and 1017. Over residues 971–992 (SPLPRTRSGPLPSSSGSSSSSS) the composition is skewed to low complexity. Polar residues predominate over residues 1009 to 1018 (LLTQNGTGSL). Residues 1144-1208 (DMGKIEEMEK…ARRQQLVEKE (65 aa)) are a coiled coil. The PH domain occupies 1256 to 1370 (SKVCRGYLVK…WMDVIVTGAE (115 aa)).

This Homo sapiens (Human) protein is Pleckstrin homology-like domain family B member 1 (PHLDB1).